A 349-amino-acid polypeptide reads, in one-letter code: Histidinol-phosphate aminotransferase (349 aa).

Residue K206 is modified to N6-(pyridoxal phosphate)lysine.

Belongs to the class-II pyridoxal-phosphate-dependent aminotransferase family. Histidinol-phosphate aminotransferase subfamily. As to quaternary structure, homodimer. Requires pyridoxal 5'-phosphate as cofactor.

It carries out the reaction L-histidinol phosphate + 2-oxoglutarate = 3-(imidazol-4-yl)-2-oxopropyl phosphate + L-glutamate. The protein operates within amino-acid biosynthesis; L-histidine biosynthesis; L-histidine from 5-phospho-alpha-D-ribose 1-diphosphate: step 7/9. This is Histidinol-phosphate aminotransferase from Streptococcus mutans serotype c (strain ATCC 700610 / UA159).